The sequence spans 888 residues: Pyruvate dehydrogenase E1 component (888 aa).

In terms of assembly, homodimer. Part of the PDH complex, consisting of multiple copies of pyruvate dehydrogenase (E1), dihydrolipoamide acetyltransferase (E2) and lipoamide dehydrogenase (E3). Thiamine diphosphate is required as a cofactor.

It catalyses the reaction N(6)-[(R)-lipoyl]-L-lysyl-[protein] + pyruvate + H(+) = N(6)-[(R)-S(8)-acetyldihydrolipoyl]-L-lysyl-[protein] + CO2. In terms of biological role, component of the pyruvate dehydrogenase (PDH) complex, that catalyzes the overall conversion of pyruvate to acetyl-CoA and CO(2). In Buchnera aphidicola subsp. Schizaphis graminum (strain Sg), this protein is Pyruvate dehydrogenase E1 component (aceE).